The following is a 462-amino-acid chain: GTPase Der (462 aa).

EngA-type G domains follow at residues 3 to 170 (ITIA…TSQK) and 201 to 372 (IKIA…FNSI). Residues 9 to 16 (GRTNVGKS), 57 to 61 (DTPGI), 122 to 125 (NKIE), 207 to 214 (GKPNVGKS), 254 to 258 (DTAGI), and 319 to 322 (NKND) each bind GTP. The 85-residue stretch at 373-457 (KKIHTSKITE…SIVLYFKSSK (85 aa)) folds into the KH-like domain.

Belongs to the TRAFAC class TrmE-Era-EngA-EngB-Septin-like GTPase superfamily. EngA (Der) GTPase family. Associates with the 50S ribosomal subunit.

GTPase that plays an essential role in the late steps of ribosome biogenesis. In Buchnera aphidicola subsp. Baizongia pistaciae (strain Bp), this protein is GTPase Der.